Here is a 449-residue protein sequence, read N- to C-terminus: C4-dicarboxylate transport protein (449 aa).

9 helical membrane-spanning segments follow: residues 5–25 (AVFK…VSLG), 45–65 (LIKM…IAGM), 77–97 (LAVL…LIVV), 149–169 (GDML…HSFG), 185–205 (VLFG…FGAM), 231–251 (CVIF…FSII), 298–318 (GYSF…VFIA), 332–352 (TLLV…GSGF), and 353–373 (IVLA…LALI).

Belongs to the dicarboxylate/amino acid:cation symporter (DAACS) (TC 2.A.23) family.

It localises to the cell inner membrane. In terms of biological role, responsible for the transport of dicarboxylates such as succinate, fumarate, and malate from the periplasm across the membrane. The protein is C4-dicarboxylate transport protein of Dechloromonas aromatica (strain RCB).